The primary structure comprises 429 residues: Phosphoribosylamine--glycine ligase (429 aa).

The ATP-grasp domain maps to 109-316 (KDFLARHQIP…LVDLCLAACD (208 aa)). 135–196 (LREKGAPIVI…EEFLDGEEAS (62 aa)) lines the ATP pocket. Mg(2+)-binding residues include E286 and N288.

This sequence belongs to the GARS family. In terms of assembly, monomer. The cofactor is Mg(2+). Mn(2+) serves as cofactor.

It catalyses the reaction 5-phospho-beta-D-ribosylamine + glycine + ATP = N(1)-(5-phospho-beta-D-ribosyl)glycinamide + ADP + phosphate + H(+). It participates in purine metabolism; IMP biosynthesis via de novo pathway; N(1)-(5-phospho-D-ribosyl)glycinamide from 5-phospho-alpha-D-ribose 1-diphosphate: step 2/2. The protein is Phosphoribosylamine--glycine ligase of Salmonella typhi.